The sequence spans 124 residues: Fluoride-specific ion channel FluC (124 aa).

Helical transmembrane passes span 4-24 (VIFI…LSGW), 32-52 (AFPY…GLIM), 68-88 (GLTI…YETF), and 96-116 (LLIA…FTWL). G75 and T78 together coordinate Na(+).

Belongs to the fluoride channel Fluc/FEX (TC 1.A.43) family.

The protein resides in the cell inner membrane. It carries out the reaction fluoride(in) = fluoride(out). Na(+) is not transported, but it plays an essential structural role and its presence is essential for fluoride channel function. In terms of biological role, fluoride-specific ion channel. Important for reducing fluoride concentration in the cell, thus reducing its toxicity. The sequence is that of Fluoride-specific ion channel FluC from Geotalea daltonii (strain DSM 22248 / JCM 15807 / FRC-32) (Geobacter daltonii).